Consider the following 245-residue polypeptide: Protein crossbronx (245 aa).

In terms of domain architecture, UBC core spans 20–177; it reads QQEYKILAEY…VQESIVESKS (158 aa).

Belongs to the ubiquitin-conjugating enzyme family. FTS subfamily.

In Drosophila virilis (Fruit fly), this protein is Protein crossbronx (cbx).